The sequence spans 492 residues: Forkhead box protein O6 (492 aa).

4 disordered regions span residues Met-1–Pro-76, Ser-163–Ala-235, Gly-315–Pro-338, and Phe-466–Gly-492. Residues Trp-88–Ala-182 constitute a DNA-binding region (fork-head). Ser-184 carries the phosphoserine modification. Residues Leu-192–Gln-203 show a composition bias toward basic residues. Over residues Pro-225–Ala-235 the composition is skewed to low complexity. Residues Leu-472 to Asn-486 show a composition bias toward pro residues.

In terms of processing, phosphorylation of Ser-184 is be important in regulating the transacriptional activity.

It localises to the cytoplasm. It is found in the nucleus. Its function is as follows. Transcriptional activator. The protein is Forkhead box protein O6 (FOXO6) of Homo sapiens (Human).